A 47-amino-acid chain; its full sequence is PhoP/PhoQ regulator MgrB (47 aa).

A helical transmembrane segment spans residues 6–26 (WAILLAVLVACLLLWMQTLNV).

This sequence belongs to the MgrB family. As to quaternary structure, may form homooligomers. Probably interacts with the periplasmic domain of PhoQ.

Its subcellular location is the cell inner membrane. Functionally, phoP-regulated transcription is redox-sensitive, being activated when the periplasm becomes more reducing. MgrB acts between DsbA/DsbB and PhoP/PhoQ in this pathway. Represses PhoP/PhoQ signaling, possibly by binding to the periplasmic domain of PhoQ, altering its activity and that of downstream effector PhoP. The polypeptide is PhoP/PhoQ regulator MgrB (Cronobacter sakazakii (strain ATCC BAA-894) (Enterobacter sakazakii)).